The chain runs to 130 residues: Large ribosomal subunit protein bL20c (130 aa).

This sequence belongs to the bacterial ribosomal protein bL20 family.

The protein resides in the plastid. Its subcellular location is the chloroplast. In terms of biological role, binds directly to 23S ribosomal RNA and is necessary for the in vitro assembly process of the 50S ribosomal subunit. It is not involved in the protein synthesizing functions of that subunit. The chain is Large ribosomal subunit protein bL20c from Fagopyrum esculentum subsp. ancestrale (Wild buckwheat).